The primary structure comprises 302 residues: Sulfotransferase 1C4 (302 aa).

55-60 contributes to the 3'-phosphoadenylyl sulfate binding site; it reads KAGTTW. 113 to 115 is a binding site for substrate; that stretch reads KTH. Residue His-115 is the Proton acceptor of the active site. Residues Arg-137, Ser-145, Tyr-200, 234 to 239, and 262 to 266 each bind 3'-phosphoadenylyl sulfate; these read TSFDVM and FMRKG.

It belongs to the sulfotransferase 1 family. In terms of tissue distribution, expressed at high levels in fetal lung and kidney and at low levels in fetal heart, adult kidney, ovary and spinal cord.

The protein resides in the cytoplasm. The protein localises to the cytosol. It carries out the reaction a phenol + 3'-phosphoadenylyl sulfate = an aryl sulfate + adenosine 3',5'-bisphosphate + H(+). It catalyses the reaction 17beta-estradiol + 3'-phosphoadenylyl sulfate = 17beta-estradiol 3-sulfate + adenosine 3',5'-bisphosphate + H(+). The enzyme catalyses bisphenol A + 3'-phosphoadenylyl sulfate = bisphenyl A sulfate + adenosine 3',5'-bisphosphate + H(+). Functionally, sulfotransferase that utilizes 3'-phospho-5'-adenylyl sulfate (PAPS) as sulfonate donor to catalyze the sulfate conjugation of phenolic compounds. Can also sulfonate estrogenic compounds, however, the dietary flavonoids (phytoestrogen) and environmental estrogens, like bisphenol A are better substrates than 17beta-estradiol (E2). Mediates the sulfation of doxorubicin and its analog epirubicin, two antitumor anthracyclines. This chain is Sulfotransferase 1C4, found in Homo sapiens (Human).